The chain runs to 208 residues: Probable nicotinate-nucleotide adenylyltransferase (208 aa).

This sequence belongs to the NadD family.

It catalyses the reaction nicotinate beta-D-ribonucleotide + ATP + H(+) = deamido-NAD(+) + diphosphate. Its pathway is cofactor biosynthesis; NAD(+) biosynthesis; deamido-NAD(+) from nicotinate D-ribonucleotide: step 1/1. In terms of biological role, catalyzes the reversible adenylation of nicotinate mononucleotide (NaMN) to nicotinic acid adenine dinucleotide (NaAD). The protein is Probable nicotinate-nucleotide adenylyltransferase of Nostoc sp. (strain PCC 7120 / SAG 25.82 / UTEX 2576).